The sequence spans 373 residues: tRNA-specific 2-thiouridylase MnmA (373 aa).

ATP is bound by residues 12–19 and M38; that span reads GMSGGVDS. Positions 98–100 are interaction with target base in tRNA; sequence NPD. Catalysis depends on C103, which acts as the Nucleophile. Cysteines 103 and 200 form a disulfide. Residue G127 coordinates ATP. The interval 150 to 152 is interaction with tRNA; sequence KDQ. C200 acts as the Cysteine persulfide intermediate in catalysis. Residues 312 to 313 are interaction with tRNA; sequence RY.

The protein belongs to the MnmA/TRMU family.

It localises to the cytoplasm. It carries out the reaction S-sulfanyl-L-cysteinyl-[protein] + uridine(34) in tRNA + AH2 + ATP = 2-thiouridine(34) in tRNA + L-cysteinyl-[protein] + A + AMP + diphosphate + H(+). Catalyzes the 2-thiolation of uridine at the wobble position (U34) of tRNA, leading to the formation of s(2)U34. This chain is tRNA-specific 2-thiouridylase MnmA, found in Streptococcus pneumoniae (strain 70585).